Reading from the N-terminus, the 960-residue chain is Dynamin-like GTPase OPA1, mitochondrial (960 aa).

The N-terminal 87 residues, 1–87 (MWRAGRAALA…TKYGYQPRRN (87 aa)), are a transit peptide targeting the mitochondrion. Over 88 to 96 (FWPARLAAR) the chain is Mitochondrial matrix. A helical transmembrane segment spans residues 97–113 (LLKLRYIILGSAVGGGY). The Mitochondrial intermembrane portion of the chain corresponds to 114 to 770 (TAKKTFDEWK…NAIENMIGPD (657 aa)). The stretch at 210-254 (SDKEKIDQLQEELLHTQLKYQRILERLEKENKELRKLVLQKDDKG) forms a coiled coil. Positions 217–222 (QLQEEL) match the LQQQIQ motif motif. Position 228 is an N6-acetyllysine (K228). Positions 234–239 (ERLEKE) match the LQQQIQ motif motif. One can recognise a Dynamin-type G domain in the interval 285–561 (QDHLPRVVVV…FWKMVRESVE (277 aa)). Positions 295–302 (GDQSAGKT) are G1 motif. The GTP site is built by S298, G300, K301, T302, S303, and G317. T302 is a binding site for Mg(2+). The interval 321–324 (MMTR) is G2 motif. The Mg(2+) site is built by T323 and D398. The segment at 398 to 401 (DLPG) is G3 motif. The G4 motif stretch occupies residues 467–470 (TKVD). Residues K468, D470, and T503 each coordinate GTP. The interval 501 to 504 (VVTG) is G5 motif. Stalk region stretches follow at residues 589-836 (DRNE…IKDT) and 874-928 (CNDV…VKLL). The segment at 736 to 856 (SDKQQWDAAI…KTALNHCNLC (121 aa)) is paddle region. The stretch at 771-781 (WKKRWIYWKNR) is an intramembrane region. The Mitochondrial intermembrane segment spans residues 782-960 (TQEQCVHNET…AFIEALHQEK (179 aa)). The cysteines at positions 856 and 874 are disulfide-linked. Positions 895–960 (RQQLTNTEVR…AFIEALHQEK (66 aa)) form a coiled coil.

It belongs to the TRAFAC class dynamin-like GTPase superfamily. Dynamin/Fzo/YdjA family. Oligomeric complex consisting of membrane-bound and soluble forms of OPA1. Interacts with RCC1L; RCC1L acts as a guanine nucleotide exchange factor (GEF) for OPA1 by exchanging bound GDP for free GTP. Interacts with CHCHD3 and IMMT; these interactions occur preferentially with soluble OPA1 forms. Interacts with PRELID1. Post-translationally, cleaved by OMA1 or YME1L downstream of the transmembrane region in response to different signals to generate soluble forms. Cleaved by OMA1 at position S1 following stress conditions, generating the short soluble form (Dynamin-like GTPase OPA1, short form; S-OPA1). AFG3L2 is involved in the regulation of OMA1-dependent processing of OPA1. PARL-dependent proteolytic processing releases an antiapoptotic soluble form not required for mitochondrial fusion. In terms of processing, cleavage at position S2 by YME1L is required to mediate oxidative phosphorylation (OXPHOS)-induced mitochondrial fusion. Cleavage occurs in the sequence motif Leu-Gln-Gln-Gln-Ile-Gln (LQQQIQ). As to expression, expressed in brain as well as retinal ganglion, starbust amacrine and horizontal cells of the retina. Absent from nerve fibers and photoreceptor cells of the retina.

Its subcellular location is the mitochondrion inner membrane. It is found in the mitochondrion intermembrane space. The catalysed reaction is GTP + H2O = GDP + phosphate + H(+). With respect to regulation, activated by guanine nucleotide exchange factor RCC1L. Dynamin-related GTPase that is essential for normal mitochondrial morphology by mediating fusion of the mitochondrial inner membranes, regulating cristae morphology and maintaining respiratory chain function. Exists in two forms: the transmembrane, long form (Dynamin-like GTPase OPA1, long form; L-OPA1), which is tethered to the inner mitochondrial membrane, and the short soluble form (Dynamin-like GTPase OPA1, short form; S-OPA1), which results from proteolytic cleavage and localizes in the intermembrane space. Both forms (L-OPA1 and S-OPA1) cooperate to catalyze the fusion of the mitochondrial inner membrane. The equilibrium between L-OPA1 and S-OPA1 is essential: excess levels of S-OPA1, produced by cleavage by OMA1 following loss of mitochondrial membrane potential, lead to an impaired equilibrium between L-OPA1 and S-OPA1, inhibiting mitochondrial fusion. The balance between L-OPA1 and S-OPA1 also influences cristae shape and morphology. Involved in remodeling cristae and the release of cytochrome c during apoptosis. Proteolytic processing by PARL in response to intrinsic apoptotic signals may lead to disassembly of OPA1 oligomers and release of the caspase activator cytochrome C (CYCS) into the mitochondrial intermembrane space. Acts as a regulator of T-helper Th17 cells, which are characterized by cells with fused mitochondria with tight cristae, by mediating mitochondrial membrane remodeling: OPA1 is required for interleukin-17 (IL-17) production. Its role in mitochondrial morphology is required for mitochondrial genome maintenance. Its function is as follows. Constitutes the transmembrane long form (L-OPA1) that plays a central role in mitochondrial inner membrane fusion and cristae morphology. L-OPA1 and the soluble short form (S-OPA1) form higher-order helical assemblies that coordinate the fusion of mitochondrial inner membranes. Inner membrane-anchored L-OPA1 molecules initiate membrane remodeling by recruiting soluble S-OPA1 to rapidly polymerize into a flexible cylindrical scaffold encaging the mitochondrial inner membrane. Once at the membrane surface, the formation of S-OPA1 helices induce bilayer curvature. OPA1 dimerization through the paddle region, which inserts into cardiolipin-containing membrane, promotes GTP hydrolysis and the helical assembly of a flexible OPA1 lattice on the membrane, which drives membrane curvature and mitochondrial fusion. Plays a role in the maintenance and remodeling of mitochondrial cristae, some invaginations of the mitochondrial inner membrane that provide an increase in the surface area. Probably acts by forming helical filaments at the inside of inner membrane tubes with the shape and dimensions of crista junctions. The equilibrium between L-OPA1 and S-OPA1 influences cristae shape and morphology: increased L-OPA1 levels promote cristae stacking and elongated mitochondria, while increased S-OPA1 levels correlated with irregular cristae packing and round mitochondria shape. Functionally, constitutes the soluble short form (S-OPA1) generated by cleavage by OMA1, which plays a central role in mitochondrial inner membrane fusion and cristae morphology. The transmembrane long form (L-OPA1) and the S-OPA1 form higher-order helical assemblies that coordinate the fusion of mitochondrial inner membranes. Inner membrane-anchored L-OPA1 molecules initiate membrane remodeling by recruiting soluble S-OPA1 to rapidly polymerize into a flexible cylindrical scaffold encaging the mitochondrial inner membrane. Once at the membrane surface, the formation of S-OPA1 helices induce bilayer curvature. OPA1 dimerization through the paddle region, which inserts into cardiolipin-containing membrane, promotes GTP hydrolysis and the helical assembly of a flexible OPA1 lattice on the membrane, which drives membrane curvature and mitochondrial fusion. Excess levels of S-OPA1 produced by cleavage by OMA1 following stress conditions that induce loss of mitochondrial membrane potential, lead to an impaired equilibrium between L-OPA1 and S-OPA1, thereby inhibiting mitochondrial fusion. Involved in mitochondrial safeguard in response to transient mitochondrial membrane depolarization by mediating flickering: cleavage by OMA1 leads to excess production of S-OPA1, preventing mitochondrial hyperfusion. Plays a role in the maintenance and remodeling of mitochondrial cristae, some invaginations of the mitochondrial inner membrane that provide an increase in the surface area. Probably acts by forming helical filaments at the inside of inner membrane tubes with the shape and dimensions of crista junctions. The equilibrium between L-OPA1 and S-OPA1 influences cristae shape and morphology: increased L-OPA1 levels promote cristae stacking and elongated mitochondria, while increased S-OPA1 levels correlated with irregular cristae packing and round mitochondria shape. In terms of biological role, isoforms that contain the alternative exon 4b are required for mitochondrial genome maintenance, possibly by anchoring the mitochondrial nucleoids to the inner mitochondrial membrane. The sequence is that of Dynamin-like GTPase OPA1, mitochondrial from Rattus norvegicus (Rat).